The sequence spans 257 residues: Alcohol dehydrogenase 1 (257 aa).

An NAD(+)-binding site is contributed by 9–33 (VFVGGLGFIAYEACKYLMNNDLASL). S137 serves as a coordination point for substrate. Y150 acts as the Proton acceptor in catalysis.

The protein belongs to the short-chain dehydrogenases/reductases (SDR) family. Homodimer.

It catalyses the reaction a primary alcohol + NAD(+) = an aldehyde + NADH + H(+). It carries out the reaction a secondary alcohol + NAD(+) = a ketone + NADH + H(+). This is Alcohol dehydrogenase 1 (ADH1) from Ceratitis capitata (Mediterranean fruit fly).